The sequence spans 236 residues: ATP synthase subunit a (236 aa).

5 helical membrane passes run 17-37, 75-95, 112-132, 174-194, and 208-228; these read LSDM…AVAA, FLTL…LGLP, DATV…YYGV, IYAG…YGVL, and FSIF…MVYM.

Belongs to the ATPase A chain family. In terms of assembly, F-type ATPases have 2 components, CF(1) - the catalytic core - and CF(0) - the membrane proton channel. CF(1) has five subunits: alpha(3), beta(3), gamma(1), delta(1), epsilon(1). CF(0) has three main subunits: a(1), b(2) and c(9-12). The alpha and beta chains form an alternating ring which encloses part of the gamma chain. CF(1) is attached to CF(0) by a central stalk formed by the gamma and epsilon chains, while a peripheral stalk is formed by the delta and b chains.

The protein localises to the cell membrane. Functionally, key component of the proton channel; it plays a direct role in the translocation of protons across the membrane. The chain is ATP synthase subunit a from Geobacillus stearothermophilus (Bacillus stearothermophilus).